The primary structure comprises 276 residues: Urease accessory protein UreD (276 aa).

Belongs to the UreD family. In terms of assembly, ureD, UreF and UreG form a complex that acts as a GTP-hydrolysis-dependent molecular chaperone, activating the urease apoprotein by helping to assemble the nickel containing metallocenter of UreC. The UreE protein probably delivers the nickel.

It localises to the cytoplasm. Required for maturation of urease via the functional incorporation of the urease nickel metallocenter. This Albidiferax ferrireducens (strain ATCC BAA-621 / DSM 15236 / T118) (Rhodoferax ferrireducens) protein is Urease accessory protein UreD.